The following is a 67-amino-acid chain: Small ribosomal subunit protein bS21 (67 aa).

It belongs to the bacterial ribosomal protein bS21 family.

This Nitratidesulfovibrio vulgaris (strain DP4) (Desulfovibrio vulgaris) protein is Small ribosomal subunit protein bS21.